The following is a 432-amino-acid chain: Amino-acid acetyltransferase (432 aa).

Residues Glu286 to Ser425 enclose the N-acetyltransferase domain.

Belongs to the acetyltransferase family. ArgA subfamily.

It localises to the cytoplasm. It carries out the reaction L-glutamate + acetyl-CoA = N-acetyl-L-glutamate + CoA + H(+). The protein operates within amino-acid biosynthesis; L-arginine biosynthesis; N(2)-acetyl-L-ornithine from L-glutamate: step 1/4. This chain is Amino-acid acetyltransferase, found in Pseudomonas aeruginosa (strain LESB58).